We begin with the raw amino-acid sequence, 496 residues long: UDP-N-acetylmuramate--L-alanine ligase (496 aa).

122–128 contacts ATP; the sequence is GTHGKTT.

It belongs to the MurCDEF family.

It is found in the cytoplasm. It catalyses the reaction UDP-N-acetyl-alpha-D-muramate + L-alanine + ATP = UDP-N-acetyl-alpha-D-muramoyl-L-alanine + ADP + phosphate + H(+). Its pathway is cell wall biogenesis; peptidoglycan biosynthesis. Functionally, cell wall formation. The protein is UDP-N-acetylmuramate--L-alanine ligase of Mycobacterium avium (strain 104).